The sequence spans 188 residues: HTH-type transcriptional regulator LmrA (188 aa).

The 61-residue stretch at 4-64 (GDSREKILSA…IEAVNEMKEY (61 aa)) folds into the HTH tetR-type domain. The H-T-H motif DNA-binding region spans 27–46 (GLNQIIKESGAPKGSLYYHF).

In terms of biological role, acts as a repressor of the lincomycin-resistance (lmrAB) and yxaGH operons. The chain is HTH-type transcriptional regulator LmrA (lmrA) from Bacillus subtilis (strain 168).